A 498-amino-acid polypeptide reads, in one-letter code: Inosine-5'-monophosphate dehydrogenase (498 aa).

CBS domains follow at residues Met98–Ile155 and Met159–Ser216. NAD(+)-binding positions include Asp253 and Gly303–Gly305. Gly305 and Gly307 together coordinate K(+). Ser308 lines the IMP pocket. Residue Cys310 participates in K(+) binding. Cys310 acts as the Thioimidate intermediate in catalysis. Residues Asp343–Gly345, Gly366–Ser367, and Tyr390–Gly394 each bind IMP. Arg406 (proton acceptor) is an active-site residue. Glu421 lines the IMP pocket. Positions 475, 476, and 477 each coordinate K(+).

Belongs to the IMPDH/GMPR family. Homotetramer. It depends on K(+) as a cofactor.

It catalyses the reaction IMP + NAD(+) + H2O = XMP + NADH + H(+). Its pathway is purine metabolism; XMP biosynthesis via de novo pathway; XMP from IMP: step 1/1. With respect to regulation, mycophenolic acid (MPA) is a non-competitive inhibitor that prevents formation of the closed enzyme conformation by binding to the same site as the amobile flap. In contrast, mizoribine monophosphate (MZP) is a competitive inhibitor that induces the closed conformation. MPA is a potent inhibitor of mammalian IMPDHs but a poor inhibitor of the bacterial enzymes. MZP is a more potent inhibitor of bacterial IMPDH. Its function is as follows. Catalyzes the conversion of inosine 5'-phosphate (IMP) to xanthosine 5'-phosphate (XMP), the first committed and rate-limiting step in the de novo synthesis of guanine nucleotides, and therefore plays an important role in the regulation of cell growth. This is Inosine-5'-monophosphate dehydrogenase from Rhizobium tropici.